The primary structure comprises 475 residues: ATP synthase subunit beta (475 aa).

Position 155–162 (155–162) interacts with ATP; that stretch reads GGAGVGKT.

The protein belongs to the ATPase alpha/beta chains family. In terms of assembly, F-type ATPases have 2 components, CF(1) - the catalytic core - and CF(0) - the membrane proton channel. CF(1) has five subunits: alpha(3), beta(3), gamma(1), delta(1), epsilon(1). CF(0) has three main subunits: a(1), b(2) and c(9-12). The alpha and beta chains form an alternating ring which encloses part of the gamma chain. CF(1) is attached to CF(0) by a central stalk formed by the gamma and epsilon chains, while a peripheral stalk is formed by the delta and b chains.

The protein resides in the cell inner membrane. It catalyses the reaction ATP + H2O + 4 H(+)(in) = ADP + phosphate + 5 H(+)(out). In terms of biological role, produces ATP from ADP in the presence of a proton gradient across the membrane. The catalytic sites are hosted primarily by the beta subunits. This Rhizobium etli (strain CIAT 652) protein is ATP synthase subunit beta.